The following is a 683-amino-acid chain: Inositol-trisphosphate 3-kinase C (683 aa).

Residues 1–124 (MRRCPCRGSL…PDRSSLRTHL (124 aa)) are disordered. Over residues 13-22 (AEAGALPAAA) the composition is skewed to low complexity. Over residues 44–58 (PGAGAPAGRPEGGGP) the composition is skewed to gly residues. A compositionally biased stretch (basic and acidic residues) spans 105–124 (ETERPKQKTEPDRSSLRTHL). Ser-127 and Ser-162 each carry phosphoserine. Residues 147–308 (TDPHRSDLQF…EDGPLEEPEP (162 aa)) form a disordered region. The segment covering 196 to 206 (WTHQNSSSLQT) has biased composition (polar residues). The span at 249 to 259 (SQKKQDTEAAR) shows a compositional bias: basic and acidic residues. Residues 267 to 289 (FQIQQDTDGSWTQPSTDGSQTAP) show a composition bias toward polar residues. Over residues 297-308 (EPEDGPLEEPEP) the composition is skewed to acidic residues. The Nuclear export signal motif lies at 324-332 (LCPVPRLII). The interval 334 to 387 (PETPEPEAQPVGPPSRVEGGSGGFSSASSFDESEDDVVAGGGGASDPEDRSGSK) is disordered. Thr-336 is subject to Phosphothreonine. A Phosphoserine modification is found at Ser-404. ATP contacts are provided by residues Lys-431, 471–473 (EDL), and Asp-484. Substrate contacts are provided by residues Lys-486, 507–513 (RKDMYEK), and 534–541 (KPRYMQWR). The tract at residues 509–517 (DMYEKMVAV) is calmodulin-binding. ATP is bound by residues Lys-558 and Asp-638. Residue Lys-641 coordinates substrate.

Belongs to the inositol phosphokinase (IPK) family. In terms of tissue distribution, highly expressed in pancreas, skeletal muscle, liver, placenta and weakly in kidney and brain.

The protein localises to the nucleus. It is found in the cytoplasm. It catalyses the reaction 1D-myo-inositol 1,4,5-trisphosphate + ATP = 1D-myo-inositol 1,3,4,5-tetrakisphosphate + ADP + H(+). Its activity is regulated as follows. Activated by calcium/calmodulin. Inhibited by high concentrations of the substrate Ins(1,2,4)P3, and allosterically activated by the product Ins(1,3,4,5)P4. In terms of biological role, catalyzes the phosphorylation of 1D-myo-inositol 1,4,5-trisphosphate (InsP3) into 1D-myo-inositol 1,3,4,5-tetrakisphosphate and participates to the regulation of calcium homeostasis. Can phosphorylate inositol 2,4,5-triphosphate to inositol 2,4,5,6-tetraphosphate. The sequence is that of Inositol-trisphosphate 3-kinase C from Homo sapiens (Human).